A 139-amino-acid chain; its full sequence is Transcription antitermination protein NusB (139 aa).

It belongs to the NusB family.

In terms of biological role, involved in transcription antitermination. Required for transcription of ribosomal RNA (rRNA) genes. Binds specifically to the boxA antiterminator sequence of the ribosomal RNA (rrn) operons. The polypeptide is Transcription antitermination protein NusB (Nitratiruptor sp. (strain SB155-2)).